The primary structure comprises 261 residues: Recombination protein bet (261 aa).

Gene bet protein functions in general recombination and in the late, rolling-circle mode of lambda DNA replication. Has a function similar to that of E.coli recT. It is a single-stranded DNA binding protein that can promote renaturation of DNA. The polypeptide is Recombination protein bet (bet) (Escherichia coli (Bacteriophage lambda)).